The following is a 409-amino-acid chain: Probable aspartate/prephenate aminotransferase (409 aa).

L-aspartate contacts are provided by G39, W125, and N175. Position 239 is an N6-(pyridoxal phosphate)lysine (K239). Position 375 (R375) interacts with L-aspartate.

The protein belongs to the class-I pyridoxal-phosphate-dependent aminotransferase family. As to quaternary structure, homodimer. The cofactor is pyridoxal 5'-phosphate.

The protein localises to the cytoplasm. The catalysed reaction is L-aspartate + 2-oxoglutarate = oxaloacetate + L-glutamate. It catalyses the reaction L-arogenate + 2-oxoglutarate = prephenate + L-glutamate. Functionally, catalyzes the reversible conversion of aspartate and 2-oxoglutarate to glutamate and oxaloacetate. Can also transaminate prephenate in the presence of glutamate. In Rickettsia felis (strain ATCC VR-1525 / URRWXCal2) (Rickettsia azadi), this protein is Probable aspartate/prephenate aminotransferase (aatA).